A 350-amino-acid polypeptide reads, in one-letter code: Uroporphyrinogen decarboxylase (350 aa).

Substrate contacts are provided by residues 28-32, F47, D78, Y155, S210, and H325; that span reads RQAGR.

Belongs to the uroporphyrinogen decarboxylase family. In terms of assembly, homodimer.

It localises to the cytoplasm. It catalyses the reaction uroporphyrinogen III + 4 H(+) = coproporphyrinogen III + 4 CO2. It participates in porphyrin-containing compound metabolism; protoporphyrin-IX biosynthesis; coproporphyrinogen-III from 5-aminolevulinate: step 4/4. Functionally, catalyzes the decarboxylation of four acetate groups of uroporphyrinogen-III to yield coproporphyrinogen-III. This chain is Uroporphyrinogen decarboxylase, found in Synechocystis sp. (strain ATCC 27184 / PCC 6803 / Kazusa).